Reading from the N-terminus, the 336-residue chain is Palmitoyltransferase SWF1 (336 aa).

The Lumenal segment spans residues M1–S2. A helical transmembrane segment spans residues W3 to F23. Topologically, residues K24–K50 are cytoplasmic. The chain crosses the membrane as a helical span at residues L51–M71. The Lumenal segment spans residues R72 to R86. A helical transmembrane segment spans residues I87–S107. At R108–F179 the chain is on the cytoplasmic side. In terms of domain architecture, DHHC spans I134–I184. A helical membrane pass occupies residues Y180 to I200. Residues S201–T216 lie on the Lumenal side of the membrane. Residues I217–V237 traverse the membrane as a helical segment. The Cytoplasmic segment spans residues K238 to I336.

This sequence belongs to the DHHC palmitoyltransferase family. SWF1 subfamily.

The protein resides in the endoplasmic reticulum membrane. The catalysed reaction is L-cysteinyl-[protein] + hexadecanoyl-CoA = S-hexadecanoyl-L-cysteinyl-[protein] + CoA. In terms of biological role, palmitoyltransferase that targets several endosomal SNAREs. Palmitoylates the SNAREs SNC1, SNC2, SYN8 and TLG1, at cysteine residues close to the cytoplasmic end of their transmembrane domain. May have a role in the cellular quality control of transmembrane domain-containing proteins. This chain is Palmitoyltransferase SWF1 (SWF1), found in Saccharomyces cerevisiae (strain ATCC 204508 / S288c) (Baker's yeast).